The sequence spans 345 residues: 2-oxoglutarate and iron-dependent oxygenase domain-containing protein 2 (345 aa).

One can recognise a Fe2OG dioxygenase domain in the interval 207-301 (DSHKAFVVKY…RWNLIIWMRA (95 aa)). The Fe cation site is built by His227, Asp229, and His282. Arg292 provides a ligand contact to 2-oxoglutarate.

This sequence belongs to the OGFOD2 family. Fe(2+) is required as a cofactor. L-ascorbate serves as cofactor.

This chain is 2-oxoglutarate and iron-dependent oxygenase domain-containing protein 2 (ogfod2), found in Danio rerio (Zebrafish).